Consider the following 128-residue polypeptide: MRHRKCGRKLNRNSSHLHAMLRNMAASLIINEVIKTTLPKAKELPRVVEPLITLAKHDNIANRRLVFAKIRSNEIVSKLFRELGPRFLNRTGGYTRILKCGFRAGDNAPMAYIEFVDRISANNSKDIN.

The protein belongs to the bacterial ribosomal protein bL17 family. As to quaternary structure, part of the 50S ribosomal subunit. Contacts protein L32.

This is Large ribosomal subunit protein bL17 from Baumannia cicadellinicola subsp. Homalodisca coagulata.